Consider the following 190-residue polypeptide: Peptidoglycan recognition protein 1 (190 aa).

Positions 1–21 are cleaved as a signal peptide; the sequence is MSRRYTPLAWVLLALLGLGAA. Pyrrolidone carboxylic acid is present on Q22. 3 cysteine pairs are disulfide-bonded: C24/C148, C40/C85, and C61/C67. One can recognise an N-acetylmuramoyl-L-alanine amidase domain in the interval 46-174; sequence QPVRYVVVSH…RDVQQTLSPG (129 aa).

Belongs to the N-acetylmuramoyl-L-alanine amidase 2 family. Homodimer; disulfide-linked. As to expression, synthesized only in bone marrow. The mature protein is stored in the cytoplasmic granules of eosinophils and neutrophils but is absent from monocytes, lymphocytes, or platelets.

It is found in the secreted. Its subcellular location is the cytoplasmic granule. Its function is as follows. Innate immunity protein that plays several important functions in antimicrobial and antitumor defense systems. Acts as a pattern receptor that binds to murein peptidoglycans (PGN) of Gram-positive bacteria and thus provides bactericidal activity. Forms an equimolar complex with heat shock protein HSPA1A and induces programmed cell death through apoptosis and necroptosis in tumor cell lines by activating the TNFR1 receptor on the target cell membrane. In addition, acts in complex with the Ca(2+)-binding protein S100A4 as a chemoattractant able to induce lymphocyte movement. Mechanistically, this complex acts as a ligand of the chemotactic receptors CCR5 and CXCR3 which are present on the cells of the immune system. Also promotes the activation of lymphocytes that become able to kill virus-infected cells as well as tumor cells by modulating the spectrum of their target-cell specificity. Induction of cytotoxicity on monocyte surface requires interaction with TREM1 receptor. This Bos taurus (Bovine) protein is Peptidoglycan recognition protein 1 (PGLYRP1).